Here is a 218-residue protein sequence, read N- to C-terminus: Ribose-5-phosphate isomerase A (218 aa).

Residues 28 to 31 (SGST), 81 to 84 (DGAD), and 94 to 97 (KGGG) contribute to the substrate site. The active-site Proton acceptor is the E103. K121 provides a ligand contact to substrate.

It belongs to the ribose 5-phosphate isomerase family. In terms of assembly, homodimer.

The catalysed reaction is aldehydo-D-ribose 5-phosphate = D-ribulose 5-phosphate. It participates in carbohydrate degradation; pentose phosphate pathway; D-ribose 5-phosphate from D-ribulose 5-phosphate (non-oxidative stage): step 1/1. Functionally, catalyzes the reversible conversion of ribose-5-phosphate to ribulose 5-phosphate. The sequence is that of Ribose-5-phosphate isomerase A from Dichelobacter nodosus (strain VCS1703A).